A 263-amino-acid chain; its full sequence is Ribosomal RNA small subunit methyltransferase A (263 aa).

Residues histidine 13, leucine 15, glycine 40, glutamate 61, aspartate 86, and asparagine 105 each coordinate S-adenosyl-L-methionine.

It belongs to the class I-like SAM-binding methyltransferase superfamily. rRNA adenine N(6)-methyltransferase family. RsmA subfamily.

Its subcellular location is the cytoplasm. The enzyme catalyses adenosine(1518)/adenosine(1519) in 16S rRNA + 4 S-adenosyl-L-methionine = N(6)-dimethyladenosine(1518)/N(6)-dimethyladenosine(1519) in 16S rRNA + 4 S-adenosyl-L-homocysteine + 4 H(+). Functionally, specifically dimethylates two adjacent adenosines (A1518 and A1519) in the loop of a conserved hairpin near the 3'-end of 16S rRNA in the 30S particle. May play a critical role in biogenesis of 30S subunits. In Dichelobacter nodosus (strain VCS1703A), this protein is Ribosomal RNA small subunit methyltransferase A.